The following is a 495-amino-acid chain: Glucose-6-phosphate 1-dehydrogenase (495 aa).

Residue serine 1 is modified to N-acetylserine. Residues 15–22 (GASGDLAR), arginine 49, and lysine 149 each bind NADP(+). Residues lysine 149, 179–183 (HYLGK), glutamate 217, and aspartate 236 each bind D-glucose 6-phosphate. Histidine 241 serves as the catalytic Proton acceptor. An NADP(+)-binding site is contributed by arginine 332. Lysine 335 is a binding site for D-glucose 6-phosphate. Positions 341, 345, and 367 each coordinate NADP(+). Glutamine 369 is a D-glucose 6-phosphate binding site. NADP(+)-binding positions include 375 to 377 (YLK), 395 to 397 (DLT), and lysine 463.

Belongs to the glucose-6-phosphate dehydrogenase family.

It catalyses the reaction D-glucose 6-phosphate + NADP(+) = 6-phospho-D-glucono-1,5-lactone + NADPH + H(+). The protein operates within carbohydrate degradation; pentose phosphate pathway; D-ribulose 5-phosphate from D-glucose 6-phosphate (oxidative stage): step 1/3. Its function is as follows. Catalyzes the rate-limiting step of the oxidative pentose-phosphate pathway, which represents a route for the dissimilation of carbohydrates besides glycolysis. The main function of this enzyme is to provide reducing power (NADPH) and pentose phosphates for fatty acid and nucleic acid synthesis. This Cyberlindnera jadinii (Torula yeast) protein is Glucose-6-phosphate 1-dehydrogenase.